The chain runs to 412 residues: Cellobiose 2-epimerase (412 aa).

It belongs to the cellobiose 2-epimerase family.

It carries out the reaction D-cellobiose = beta-D-glucosyl-(1-&gt;4)-D-mannopyranose. Functionally, catalyzes the reversible epimerization of cellobiose to 4-O-beta-D-glucopyranosyl-D-mannose (Glc-Man). Can also use lactose, epilactose, mannobiose and cellotriose. Highly specific for oligosaccharides linked by the beta-1,4-glycosidic linkage. Shows preference for lactose. The polypeptide is Cellobiose 2-epimerase (ce) (Rhodothermus marinus (Rhodothermus obamensis)).